A 279-amino-acid polypeptide reads, in one-letter code: Uroplakin-3b (279 aa).

A signal peptide spans M1–T26. Over L27 to D200 the chain is Lumenal. The N-linked (GlcNAc...) asparagine glycan is linked to N77. The helical transmembrane segment at M201 to A221 threads the bilayer. Topologically, residues A222–P279 are cytoplasmic.

The protein belongs to the uroplakin-3 family. In terms of assembly, heterodimer with uroplakin-1B (UPK1B). Expression is urothelium-specific.

The protein localises to the cell membrane. Its function is as follows. Component of the asymmetric unit membrane (AUM); a highly specialized biomembrane elaborated by terminally differentiated urothelial cells. May play an important role in AUM-cytoskeleton interaction in terminally differentiated urothelial cells. It also contributes to the formation of urothelial glycocalyx which may play an important role in preventing bacterial adherence. This Bos taurus (Bovine) protein is Uroplakin-3b (UPK3B).